A 104-amino-acid polypeptide reads, in one-letter code: MSRVCELTNRKKSFGNKVSHSNRKTKRTFLLNLHKVTLTSDILNKKFRFRVATRTLRTIDYKGDLDAFLLNTRTIKLSEKAQKIKRRLKKVLVKQEVELAVSDA.

It belongs to the bacterial ribosomal protein bL28 family.

In Wolbachia pipientis wMel, this protein is Large ribosomal subunit protein bL28.